The primary structure comprises 305 residues: UDP-3-O-acyl-N-acetylglucosamine deacetylase (305 aa).

Zn(2+) is bound by residues H78, H235, and D239. H262 (proton donor) is an active-site residue.

The protein belongs to the LpxC family. It depends on Zn(2+) as a cofactor.

It carries out the reaction a UDP-3-O-[(3R)-3-hydroxyacyl]-N-acetyl-alpha-D-glucosamine + H2O = a UDP-3-O-[(3R)-3-hydroxyacyl]-alpha-D-glucosamine + acetate. It functions in the pathway glycolipid biosynthesis; lipid IV(A) biosynthesis; lipid IV(A) from (3R)-3-hydroxytetradecanoyl-[acyl-carrier-protein] and UDP-N-acetyl-alpha-D-glucosamine: step 2/6. Functionally, catalyzes the hydrolysis of UDP-3-O-myristoyl-N-acetylglucosamine to form UDP-3-O-myristoylglucosamine and acetate, the committed step in lipid A biosynthesis. The chain is UDP-3-O-acyl-N-acetylglucosamine deacetylase from Citrifermentans bemidjiense (strain ATCC BAA-1014 / DSM 16622 / JCM 12645 / Bem) (Geobacter bemidjiensis).